Consider the following 1221-residue polypeptide: Putative DNA-directed RNA polymerase II subunit RPB2 homolog (1221 aa).

2 stretches are compositionally biased toward low complexity: residues 1-54 and 692-701; these read MSRG…SASS and PAPSSSPSDS. Disordered regions lie at residues 1–63 and 673–701; these read MSRG…PMSE and RGSG…PSDS. D823 lines the Mg(2+) pocket. C1174, C1177, C1187, and C1190 together coordinate Zn(2+). Residues 1174–1190 form a C4-type zinc finger; sequence CKECGRISDHFEYCRMC.

This sequence belongs to the RNA polymerase beta chain family.

It carries out the reaction RNA(n) + a ribonucleoside 5'-triphosphate = RNA(n+1) + diphosphate. In terms of biological role, component of the DNA-dependent RNA polymerase that catalyzes the transcription of DNA into RNA using the four ribonucleoside triphosphates as substrates. Second largest component of RNA polymerase II which synthesizes mRNA precursors and many functional non-coding RNAs. Proposed to contribute to the polymerase catalytic activity and forms the polymerase active center together with the largest subunit. The protein is Putative DNA-directed RNA polymerase II subunit RPB2 homolog of Dryophytes versicolor (chameleon treefrog).